A 308-amino-acid chain; its full sequence is tRNA pseudouridine synthase B (308 aa).

Asp47 (nucleophile) is an active-site residue.

The protein belongs to the pseudouridine synthase TruB family. Type 1 subfamily.

The enzyme catalyses uridine(55) in tRNA = pseudouridine(55) in tRNA. Responsible for synthesis of pseudouridine from uracil-55 in the psi GC loop of transfer RNAs. The protein is tRNA pseudouridine synthase B of Xanthomonas campestris pv. campestris (strain 8004).